A 276-amino-acid chain; its full sequence is Stathmin domain-containing protein 1 (276 aa).

3 disordered regions span residues 1-40, 61-106, and 226-250; these read MGCG…ENCS, VQMG…RERQ, and GFEP…ATLI. Gly2 carries N-myristoyl glycine lipidation. Polar residues-rich tracts occupy residues 68-78 and 87-100; these read GTISENSPSPS and DLVT…PQSL. Positions 118–244 constitute an SLD domain; that stretch reads QGIIQSHSKV…GKPLKRKKSK (127 aa).

The chain is Stathmin domain-containing protein 1 (STMND1) from Homo sapiens (Human).